Reading from the N-terminus, the 430-residue chain is MFVDQVKISLKAGDGGNGITAYRREKYVPFGGPAGGDGGKGASVVFEVDEGLRTLLDFRYQRHFKASKGENGQSSNMHGKNAEDLVLKVPPGTIIKNVETDEVLADLVEDGQRAVVAKGGRGGRGNSRFATPRNPAPDFSEKGEPGEELDVSLELKLLADVGLVGFPSVGKSTLLSIVSKAKPKIGAYHFTTIKPNLGVVSTPDQRSFVMADLPGLIEGASDGVGLGHQFLRHVERTKVIVHMIDMSGSEGREPIEDYKVINQELAAYEQRLEDRPQIVVANKMDLPESQDNLNLFKEEIGEDVPVIPVSTITRDNIDQLLYAIADKLEEYKDVDFTVEEEESVGINRVLYKHTPSQDKFTISRDDDGAYVVSGNAIERMFKMTDFNSDPAVRRFARQMRSMGIDDALRERGCKNGDIVRILGGEFEFVE.

The 158-residue stretch at 1-158 (MFVDQVKISL…LDVSLELKLL (158 aa)) folds into the Obg domain. A disordered region spans residues 118 to 145 (KGGRGGRGNSRFATPRNPAPDFSEKGEP). In terms of domain architecture, OBG-type G spans 159 to 329 (ADVGLVGFPS…LLYAIADKLE (171 aa)). GTP-binding positions include 165 to 172 (GFPSVGKS), 190 to 194 (FTTIK), 212 to 215 (DLPG), 282 to 285 (NKMD), and 310 to 312 (STI). Residues serine 172 and threonine 192 each contribute to the Mg(2+) site. The OCT domain maps to 352-430 (KHTPSQDKFT…ILGGEFEFVE (79 aa)).

Belongs to the TRAFAC class OBG-HflX-like GTPase superfamily. OBG GTPase family. As to quaternary structure, monomer. Mg(2+) is required as a cofactor.

It localises to the cytoplasm. An essential GTPase which binds GTP, GDP and possibly (p)ppGpp with moderate affinity, with high nucleotide exchange rates and a fairly low GTP hydrolysis rate. Plays a role in control of the cell cycle, stress response, ribosome biogenesis and in those bacteria that undergo differentiation, in morphogenesis control. The sequence is that of GTPase Obg from Staphylococcus aureus (strain Mu3 / ATCC 700698).